Here is a 516-residue protein sequence, read N- to C-terminus: Exodeoxyribonuclease 7 large subunit (516 aa).

This sequence belongs to the XseA family. As to quaternary structure, heterooligomer composed of large and small subunits.

The protein resides in the cytoplasm. The enzyme catalyses Exonucleolytic cleavage in either 5'- to 3'- or 3'- to 5'-direction to yield nucleoside 5'-phosphates.. Its function is as follows. Bidirectionally degrades single-stranded DNA into large acid-insoluble oligonucleotides, which are then degraded further into small acid-soluble oligonucleotides. In Chlamydia trachomatis serovar A (strain ATCC VR-571B / DSM 19440 / HAR-13), this protein is Exodeoxyribonuclease 7 large subunit.